Here is a 312-residue protein sequence, read N- to C-terminus: Erlin (312 aa).

Over 1–3 (MLT) the chain is Cytoplasmic. The helical transmembrane segment at 4–24 (ELALGLFALWIAIFSQALHKI) threads the bilayer. The Lumenal segment spans residues 25–312 (EEGHVGVYYR…FVMGTTQQTV (288 aa)). N-linked (GlcNAc...) asparagine glycosylation is present at asparagine 104.

This sequence belongs to the band 7/mec-2 family. As to quaternary structure, seems to form a multimeric complex. As to expression, expressed in the germline only.

It localises to the endoplasmic reticulum membrane. This chain is Erlin, found in Caenorhabditis elegans.